Reading from the N-terminus, the 59-residue chain is Large ribosomal subunit protein bL32C (59 aa).

Belongs to the bacterial ribosomal protein bL32 family.

The protein is Large ribosomal subunit protein bL32C (rpmF3) of Enterococcus faecalis (strain ATCC 700802 / V583).